Here is a 177-residue protein sequence, read N- to C-terminus: ATP synthase subunit delta (177 aa).

This sequence belongs to the ATPase delta chain family. As to quaternary structure, F-type ATPases have 2 components, F(1) - the catalytic core - and F(0) - the membrane proton channel. F(1) has five subunits: alpha(3), beta(3), gamma(1), delta(1), epsilon(1). F(0) has three main subunits: a(1), b(2) and c(10-14). The alpha and beta chains form an alternating ring which encloses part of the gamma chain. F(1) is attached to F(0) by a central stalk formed by the gamma and epsilon chains, while a peripheral stalk is formed by the delta and b chains.

The protein localises to the cell inner membrane. In terms of biological role, f(1)F(0) ATP synthase produces ATP from ADP in the presence of a proton or sodium gradient. F-type ATPases consist of two structural domains, F(1) containing the extramembraneous catalytic core and F(0) containing the membrane proton channel, linked together by a central stalk and a peripheral stalk. During catalysis, ATP synthesis in the catalytic domain of F(1) is coupled via a rotary mechanism of the central stalk subunits to proton translocation. Functionally, this protein is part of the stalk that links CF(0) to CF(1). It either transmits conformational changes from CF(0) to CF(1) or is implicated in proton conduction. This is ATP synthase subunit delta from Cronobacter sakazakii (strain ATCC BAA-894) (Enterobacter sakazakii).